The primary structure comprises 292 residues: Nucleotide-binding protein azo0399 (292 aa).

8 to 15 provides a ligand contact to ATP; the sequence is GLSGSGKS. Residue 57 to 60 coordinates GTP; sequence DMRS.

The protein belongs to the RapZ-like family.

Displays ATPase and GTPase activities. The chain is Nucleotide-binding protein azo0399 from Azoarcus sp. (strain BH72).